Here is a 614-residue protein sequence, read N- to C-terminus: MMADESFDLESLGSDEIFEGVNLDELEQQAQTQVQAQSSQVVVPSEKQKQNLNLPNSYTNSSQKVRESTVNSQASLSSNDLRTELLIKSGENAILRANLLKQSEANNAALESLNNSIKQKQDEYQRKLEELKKEIEYAKTKSLFHEREAQDAIETMKKMKRDVKNSPIMKKSHEEDGDNKLLSSSDQLAKSTKHAAKNSPSKKKRKTSVATAEDASTDSVSSSIAISDASLSLSLMKDLLSLQKREDLYFSSRTLAYVFGGCMHSLETIEGEEEGECLFNNLKALIYSPDLSMDSSNYVQSVVQTSSSILNYSMKKLLYNASFAITSLFNALLILDPKSSTFIFQENVVSLISGFLLKEYEKSNFLDSKFYVLIDFLYLYLSIARESADDFANITKAVDPSLFESCIRVQNAPSLIKCGVCLIISSTTPSFCASVNLLNADDKSQESLMQLFTTMAHILVVTTRERINFPELNEWITLHRFVISFFTVFIQMSGNIGKEILKVCNPLIVCIGLAITWYHQQLLSSMYPQNECVEILVSLVRLLYILSSEDLSSKFMLAENALQPRFVYAIACCAFGDTEQKAFGNLGEEMYFLTTELLEVCVSPEELEQLYTNF.

Residues 29-43 (QAQTQVQAQSSQVVV) are compositionally biased toward low complexity. Disordered regions lie at residues 29–76 (QAQT…QASL) and 157–214 (KKMK…TAED). Polar residues-rich tracts occupy residues 50 to 76 (QNLNLPNSYTNSSQKVRESTVNSQASL) and 181 to 190 (LLSSSDQLAK). The segment covering 191–207 (STKHAAKNSPSKKKRKT) has biased composition (basic residues).

In terms of assembly, interacts with cds1.

It is found in the nucleus. Functionally, involved in cell cycle arrest when DNA synthesis is inhibited by hydroxyurea, and in mitosis arrest after treatment with DNA-damaging agents. This protein is S phase-specific. This is DNA repair protein rad26 (rad26) from Schizosaccharomyces pombe (strain 972 / ATCC 24843) (Fission yeast).